The sequence spans 400 residues: Beta-ketoadipyl-CoA thiolase (400 aa).

The Acyl-thioester intermediate role is filled by C90. Active-site proton acceptor residues include H356 and C386.

The protein belongs to the thiolase-like superfamily. Thiolase family.

It carries out the reaction succinyl-CoA + acetyl-CoA = 3-oxoadipyl-CoA + CoA. Its pathway is aromatic compound metabolism; beta-ketoadipate pathway; acetyl-CoA and succinyl-CoA from 3-oxoadipate: step 2/2. Its function is as follows. Catalyzes thiolytic cleavage of beta-ketoadipyl-CoA to succinyl-CoA and acetyl-CoA. This Pseudomonas putida (Arthrobacter siderocapsulatus) protein is Beta-ketoadipyl-CoA thiolase (pcaF).